We begin with the raw amino-acid sequence, 101 residues long: Large ribosomal subunit protein uL24 (101 aa).

It belongs to the universal ribosomal protein uL24 family. Part of the 50S ribosomal subunit.

Functionally, one of two assembly initiator proteins, it binds directly to the 5'-end of the 23S rRNA, where it nucleates assembly of the 50S subunit. Its function is as follows. One of the proteins that surrounds the polypeptide exit tunnel on the outside of the subunit. This chain is Large ribosomal subunit protein uL24, found in Lactococcus lactis subsp. lactis (strain IL1403) (Streptococcus lactis).